A 112-amino-acid polypeptide reads, in one-letter code: Small ribosomal subunit protein bS6 (112 aa).

The protein belongs to the bacterial ribosomal protein bS6 family.

Functionally, binds together with bS18 to 16S ribosomal RNA. In Azobacteroides pseudotrichonymphae genomovar. CFP2, this protein is Small ribosomal subunit protein bS6.